Consider the following 528-residue polypeptide: GMP synthase [glutamine-hydrolyzing] (528 aa).

In terms of domain architecture, Glutamine amidotransferase type-1 spans 13–204; the sequence is SILILDFGSQ…VYSIAKCKAD (192 aa). The active-site Nucleophile is cysteine 90. Active-site residues include histidine 178 and glutamate 180. The 199-residue stretch at 205 to 403 folds into the GMPS ATP-PPase domain; sequence WTTETFLEET…LGLPDEIIKR (199 aa). ATP is bound at residue 232–238; the sequence is SGGVDSS.

As to quaternary structure, homodimer.

It carries out the reaction XMP + L-glutamine + ATP + H2O = GMP + L-glutamate + AMP + diphosphate + 2 H(+). It functions in the pathway purine metabolism; GMP biosynthesis; GMP from XMP (L-Gln route): step 1/1. In terms of biological role, catalyzes the synthesis of GMP from XMP. In Prochlorococcus marinus subsp. pastoris (strain CCMP1986 / NIES-2087 / MED4), this protein is GMP synthase [glutamine-hydrolyzing].